The primary structure comprises 125 residues: Large ribosomal subunit protein bL19 (125 aa).

It belongs to the bacterial ribosomal protein bL19 family.

Its function is as follows. This protein is located at the 30S-50S ribosomal subunit interface and may play a role in the structure and function of the aminoacyl-tRNA binding site. The sequence is that of Large ribosomal subunit protein bL19 from Ehrlichia chaffeensis (strain ATCC CRL-10679 / Arkansas).